The primary structure comprises 377 residues: Queuine tRNA-ribosyltransferase (377 aa).

The active-site Proton acceptor is Asp89. Residues Asp89–Phe93, Asp143, Gln187, and Gly214 each bind substrate. Residues Gly245–Asp251 are RNA binding. Residue Asp264 is the Nucleophile of the active site. Positions Thr269 to Arg273 are RNA binding; important for wobble base 34 recognition. Positions 302, 304, 307, and 333 each coordinate Zn(2+).

It belongs to the queuine tRNA-ribosyltransferase family. As to quaternary structure, homodimer. Within each dimer, one monomer is responsible for RNA recognition and catalysis, while the other monomer binds to the replacement base PreQ1. It depends on Zn(2+) as a cofactor.

It catalyses the reaction 7-aminomethyl-7-carbaguanine + guanosine(34) in tRNA = 7-aminomethyl-7-carbaguanosine(34) in tRNA + guanine. It participates in tRNA modification; tRNA-queuosine biosynthesis. Catalyzes the base-exchange of a guanine (G) residue with the queuine precursor 7-aminomethyl-7-deazaguanine (PreQ1) at position 34 (anticodon wobble position) in tRNAs with GU(N) anticodons (tRNA-Asp, -Asn, -His and -Tyr). Catalysis occurs through a double-displacement mechanism. The nucleophile active site attacks the C1' of nucleotide 34 to detach the guanine base from the RNA, forming a covalent enzyme-RNA intermediate. The proton acceptor active site deprotonates the incoming PreQ1, allowing a nucleophilic attack on the C1' of the ribose to form the product. After dissociation, two additional enzymatic reactions on the tRNA convert PreQ1 to queuine (Q), resulting in the hypermodified nucleoside queuosine (7-(((4,5-cis-dihydroxy-2-cyclopenten-1-yl)amino)methyl)-7-deazaguanosine). This Shewanella piezotolerans (strain WP3 / JCM 13877) protein is Queuine tRNA-ribosyltransferase.